Reading from the N-terminus, the 167-residue chain is Transcription antitermination protein NusB (167 aa).

The interval 1–32 (MSDTPETGKPAAGTKPAARTEAKAPPKSARRR) is disordered.

Belongs to the NusB family.

Functionally, involved in transcription antitermination. Required for transcription of ribosomal RNA (rRNA) genes. Binds specifically to the boxA antiterminator sequence of the ribosomal RNA (rrn) operons. This is Transcription antitermination protein NusB from Cupriavidus pinatubonensis (strain JMP 134 / LMG 1197) (Cupriavidus necator (strain JMP 134)).